The sequence spans 317 residues: Olfactory receptor 2G2 (317 aa).

Topologically, residues 1-28 (MGMVRHTNESNLAGFILLGFSDYPQLQK) are extracellular. Asn-8 carries N-linked (GlcNAc...) asparagine glycosylation. A helical membrane pass occupies residues 29–52 (VLFVLILILYLLTILGNTTIILVS). Topologically, residues 53–60 (RLEPKLHM) are cytoplasmic. Residues 61–82 (PMYFFLSHLSFLYRCFTSSVIP) form a helical membrane-spanning segment. Residues 83 to 103 (QLLVNLWEPMKTIAYGGCLVH) lie on the Extracellular side of the membrane. Cysteines 100 and 192 form a disulfide. The helical transmembrane segment at 104–123 (LYNSHALGSTECVLPAVMSC) threads the bilayer. At 124–142 (DRYVAVCRPLHYTVLMHIH) the chain is on the cytoplasmic side. A helical membrane pass occupies residues 143–161 (LCMALASMAWLSGIATTLV). Residues 162 to 198 (QSTLTLQLPFCGHRQVDHFICEVPVLIKLACVGTTFN) are Extracellular-facing. A helical transmembrane segment spans residues 199–222 (EAELFVASILFLIVPVSFILVSSG). Over 223-239 (YIAHAVLRIKSATRRQK) the chain is Cytoplasmic. The chain crosses the membrane as a helical span at residues 240–262 (AFGTCFSHLTVVTIFYGTIIFMY). The Extracellular portion of the chain corresponds to 263 to 275 (LQPAKSRSRDQGK). Residues 276–295 (FVSLFYTVVTRMLNPLIYTL) traverse the membrane as a helical segment. Topologically, residues 296 to 317 (RIKEVKGALKKVLAKALGVNIL) are cytoplasmic.

It belongs to the G-protein coupled receptor 1 family.

Its subcellular location is the cell membrane. In terms of biological role, odorant receptor. The protein is Olfactory receptor 2G2 (OR2G2) of Homo sapiens (Human).